A 336-amino-acid chain; its full sequence is Holliday junction branch migration complex subunit RuvB (336 aa).

A large ATPase domain (RuvB-L) region spans residues 1–181; it reads MDRIVEIEKF…FGMQFRLEFY (181 aa). Residues Leu-20, Arg-21, Gly-62, Lys-65, Thr-66, Thr-67, 128–130, Arg-171, Tyr-181, and Arg-218 contribute to the ATP site; that span reads EDF. Thr-66 lines the Mg(2+) pocket. Residues 182-252 are small ATPAse domain (RuvB-S); the sequence is KNEELAIILE…RAKEALDSLG (71 aa). The interval 255–336 is head domain (RuvB-H); sequence ELGFDAMDLR…KYNKGLFDEK (82 aa). Arg-309 and Arg-314 together coordinate DNA.

Belongs to the RuvB family. In terms of assembly, homohexamer. Forms an RuvA(8)-RuvB(12)-Holliday junction (HJ) complex. HJ DNA is sandwiched between 2 RuvA tetramers; dsDNA enters through RuvA and exits via RuvB. An RuvB hexamer assembles on each DNA strand where it exits the tetramer. Each RuvB hexamer is contacted by two RuvA subunits (via domain III) on 2 adjacent RuvB subunits; this complex drives branch migration. In the full resolvosome a probable DNA-RuvA(4)-RuvB(12)-RuvC(2) complex forms which resolves the HJ.

The protein localises to the cytoplasm. It carries out the reaction ATP + H2O = ADP + phosphate + H(+). Its function is as follows. The RuvA-RuvB-RuvC complex processes Holliday junction (HJ) DNA during genetic recombination and DNA repair, while the RuvA-RuvB complex plays an important role in the rescue of blocked DNA replication forks via replication fork reversal (RFR). RuvA specifically binds to HJ cruciform DNA, conferring on it an open structure. The RuvB hexamer acts as an ATP-dependent pump, pulling dsDNA into and through the RuvAB complex. RuvB forms 2 homohexamers on either side of HJ DNA bound by 1 or 2 RuvA tetramers; 4 subunits per hexamer contact DNA at a time. Coordinated motions by a converter formed by DNA-disengaged RuvB subunits stimulates ATP hydrolysis and nucleotide exchange. Immobilization of the converter enables RuvB to convert the ATP-contained energy into a lever motion, pulling 2 nucleotides of DNA out of the RuvA tetramer per ATP hydrolyzed, thus driving DNA branch migration. The RuvB motors rotate together with the DNA substrate, which together with the progressing nucleotide cycle form the mechanistic basis for DNA recombination by continuous HJ branch migration. Branch migration allows RuvC to scan DNA until it finds its consensus sequence, where it cleaves and resolves cruciform DNA. This chain is Holliday junction branch migration complex subunit RuvB, found in Campylobacter lari (strain RM2100 / D67 / ATCC BAA-1060).